Consider the following 171-residue polypeptide: Co-chaperone protein HscB (171 aa).

A J domain is found at Asp-2–Leu-74.

It belongs to the HscB family. Interacts with HscA and stimulates its ATPase activity. Interacts with IscU.

In terms of biological role, co-chaperone involved in the maturation of iron-sulfur cluster-containing proteins. Seems to help targeting proteins to be folded toward HscA. The sequence is that of Co-chaperone protein HscB from Salmonella paratyphi A (strain AKU_12601).